We begin with the raw amino-acid sequence, 282 residues long: Shikimate dehydrogenase (NADP(+)) (282 aa).

Shikimate-binding positions include 15–17 and T62; that span reads SKS. K66 functions as the Proton acceptor in the catalytic mechanism. Residues N87 and D103 each coordinate shikimate. NADP(+)-binding positions include 127-131, 151-156, and M220; these read GAGGA and NRTHTK. Y222 contacts shikimate. Residue G244 coordinates NADP(+).

This sequence belongs to the shikimate dehydrogenase family. Homodimer.

It carries out the reaction shikimate + NADP(+) = 3-dehydroshikimate + NADPH + H(+). It functions in the pathway metabolic intermediate biosynthesis; chorismate biosynthesis; chorismate from D-erythrose 4-phosphate and phosphoenolpyruvate: step 4/7. Involved in the biosynthesis of the chorismate, which leads to the biosynthesis of aromatic amino acids. Catalyzes the reversible NADPH linked reduction of 3-dehydroshikimate (DHSA) to yield shikimate (SA). This Shewanella baltica (strain OS185) protein is Shikimate dehydrogenase (NADP(+)).